Here is a 158-residue protein sequence, read N- to C-terminus: NADPH-dependent 7-cyano-7-deazaguanine reductase (158 aa).

Over residues 1-13 (MAKRSNTTMTSAG) the composition is skewed to polar residues. The disordered stretch occupies residues 1-37 (MAKRSNTTMTSAGLQLGREVAPPDSPETAKLDRVPNP). The span at 27-37 (ETAKLDRVPNP) shows a compositional bias: basic and acidic residues. Cys-56 (thioimide intermediate) is an active-site residue. The active-site Proton donor is Asp-63. Residues 78-80 (VES) and 97-98 (HE) contribute to the substrate site.

The protein belongs to the GTP cyclohydrolase I family. QueF type 1 subfamily.

The protein localises to the cytoplasm. The enzyme catalyses 7-aminomethyl-7-carbaguanine + 2 NADP(+) = 7-cyano-7-deazaguanine + 2 NADPH + 3 H(+). Its pathway is tRNA modification; tRNA-queuosine biosynthesis. Its function is as follows. Catalyzes the NADPH-dependent reduction of 7-cyano-7-deazaguanine (preQ0) to 7-aminomethyl-7-deazaguanine (preQ1). This chain is NADPH-dependent 7-cyano-7-deazaguanine reductase, found in Bradyrhizobium sp. (strain ORS 278).